Here is a 469-residue protein sequence, read N- to C-terminus: Glutamine synthetase (469 aa).

A GS beta-grasp domain is found at 15–96 (NDVKFIDVRF…INFFIHDPIT (82 aa)). One can recognise a GS catalytic domain in the interval 104–469 (PRNIAKKAEA…PHEFELYFDI (366 aa)). E129 and E131 together coordinate Mg(2+). Residue E205 participates in ATP binding. 2 residues coordinate Mg(2+): E210 and E218. 221–223 (YKF) contributes to the ATP binding site. L-glutamate is bound by residues 262 to 263 (NG) and G263. H267 contributes to the Mg(2+) binding site. ATP is bound by residues 269–271 (HQS) and S271. Residues R320, E326, and R338 each coordinate L-glutamate. Positions 338, 343, and 352 each coordinate ATP. E357 is a Mg(2+) binding site. R359 contacts L-glutamate. O-AMP-tyrosine is present on Y397.

This sequence belongs to the glutamine synthetase family. In terms of assembly, oligomer of 12 subunits arranged in the form of two hexagons. It depends on Mg(2+) as a cofactor.

Its subcellular location is the cytoplasm. It carries out the reaction L-glutamate + NH4(+) + ATP = L-glutamine + ADP + phosphate + H(+). Its activity is regulated as follows. The activity of this enzyme could be controlled by adenylation under conditions of abundant glutamine. In terms of biological role, catalyzes the ATP-dependent biosynthesis of glutamine from glutamate and ammonia. The sequence is that of Glutamine synthetase from Streptomyces filamentosus (Streptomyces roseosporus).